Here is a 930-residue protein sequence, read N- to C-terminus: Serine/threonine-protein kinase PknD (930 aa).

A Protein kinase domain is found at Tyr-4–Leu-291. Residues Ile-10–Val-18 and Lys-33 each bind ATP. The Proton acceptor role is filled by Asp-138.

It belongs to the protein kinase superfamily. Ser/Thr protein kinase family. Autophosphorylated on serine and threonine residues.

It catalyses the reaction L-seryl-[protein] + ATP = O-phospho-L-seryl-[protein] + ADP + H(+). It carries out the reaction L-threonyl-[protein] + ATP = O-phospho-L-threonyl-[protein] + ADP + H(+). Functionally, together with the serine/threonine kinase Pkn1, may play a role in the specific interactions with host proteins during intracellular growth. This chain is Serine/threonine-protein kinase PknD, found in Chlamydia caviae (strain ATCC VR-813 / DSM 19441 / 03DC25 / GPIC) (Chlamydophila caviae).